Here is a 287-residue protein sequence, read N- to C-terminus: ATP synthase gamma chain (287 aa).

Belongs to the ATPase gamma chain family. F-type ATPases have 2 components, CF(1) - the catalytic core - and CF(0) - the membrane proton channel. CF(1) has five subunits: alpha(3), beta(3), gamma(1), delta(1), epsilon(1). CF(0) has three main subunits: a, b and c.

Its subcellular location is the cell inner membrane. Its function is as follows. Produces ATP from ADP in the presence of a proton gradient across the membrane. The gamma chain is believed to be important in regulating ATPase activity and the flow of protons through the CF(0) complex. In Salmonella agona (strain SL483), this protein is ATP synthase gamma chain.